A 177-amino-acid polypeptide reads, in one-letter code: ATP synthase subunit delta (177 aa).

This sequence belongs to the ATPase delta chain family. F-type ATPases have 2 components, F(1) - the catalytic core - and F(0) - the membrane proton channel. F(1) has five subunits: alpha(3), beta(3), gamma(1), delta(1), epsilon(1). F(0) has three main subunits: a(1), b(2) and c(10-14). The alpha and beta chains form an alternating ring which encloses part of the gamma chain. F(1) is attached to F(0) by a central stalk formed by the gamma and epsilon chains, while a peripheral stalk is formed by the delta and b chains.

It is found in the cell inner membrane. F(1)F(0) ATP synthase produces ATP from ADP in the presence of a proton or sodium gradient. F-type ATPases consist of two structural domains, F(1) containing the extramembraneous catalytic core and F(0) containing the membrane proton channel, linked together by a central stalk and a peripheral stalk. During catalysis, ATP synthesis in the catalytic domain of F(1) is coupled via a rotary mechanism of the central stalk subunits to proton translocation. In terms of biological role, this protein is part of the stalk that links CF(0) to CF(1). It either transmits conformational changes from CF(0) to CF(1) or is implicated in proton conduction. This Shewanella piezotolerans (strain WP3 / JCM 13877) protein is ATP synthase subunit delta.